The primary structure comprises 134 residues: Small ribosomal subunit protein uS11 (134 aa).

The protein belongs to the universal ribosomal protein uS11 family. As to quaternary structure, part of the 30S ribosomal subunit. Interacts with proteins S7 and S18. Binds to IF-3.

In terms of biological role, located on the platform of the 30S subunit, it bridges several disparate RNA helices of the 16S rRNA. Forms part of the Shine-Dalgarno cleft in the 70S ribosome. The sequence is that of Small ribosomal subunit protein uS11 from Polaromonas naphthalenivorans (strain CJ2).